A 41-amino-acid chain; its full sequence is Large ribosomal subunit protein bL36 (41 aa).

Belongs to the bacterial ribosomal protein bL36 family.

This chain is Large ribosomal subunit protein bL36, found in Methylocella silvestris (strain DSM 15510 / CIP 108128 / LMG 27833 / NCIMB 13906 / BL2).